Reading from the N-terminus, the 164-residue chain is LWamide neuropeptides (164 aa).

Residues 1–6 (RSADAQ) constitute a propeptide that is removed on maturation. The tract at residues 1-92 (RSADAQQHGL…WGRSADAQQP (92 aa)) is disordered. Residues Trp-11 and Trp-20 each carry the tryptophan amide modification. A propeptide spanning residues 23–27 (SADAQ) is cleaved from the precursor. A tryptophan amide mark is found at Trp-32 and Trp-41. Positions 44-49 (SAEPGQ) are excised as a propeptide. 2 positions are modified to tryptophan amide: Trp-53 and Trp-62. The propeptide occupies 65 to 70 (SAEPLQ). Tryptophan amide is present on residues Trp-74 and Trp-83. A propeptide spanning residues 86 to 90 (SADAQ) is cleaved from the precursor. Tryptophan amide is present on residues Trp-95, Trp-106, and Trp-115. The propeptide occupies 118–123 (SADPGQ). Tryptophan amide is present on residues Trp-127 and Trp-137. The propeptide occupies 140-164 (SYEPPQFEDLEDLKKKSAIPKPSEQ).

Belongs to the LWamide neuropeptide family.

It localises to the secreted. Metamorphosin A may be part of an internal signaling system involved in control of metamorphosis. The sequence is that of LWamide neuropeptides from Actinia equina (Beadlet anemone).